A 63-amino-acid polypeptide reads, in one-letter code: Eumenitin VP1 (63 aa).

Positions 1–22 are cleaved as a signal peptide; that stretch reads MRGTSFILFAVVVILGFLHANA. 5 AXPX repeats span residues 22–25, 26–29, 32–35, 40–43, and 44–47; these read AEPL, ANPA, ANPD, ADPL, and ADPE. Positions 23–48 are excised as a propeptide; that stretch reads EPLANPAPLANPDPLANADPLADPEA.

As to expression, expressed by the venom gland.

It localises to the secreted. It is found in the target cell membrane. Functionally, antimicrobial peptide with activities against the fungi B.cinerea (MIC=5 uM) and C.albicans (MIC=100 uM), the Gram-negative bacterium E.coli (MIC=25 uM) and the Gram-positive bacterium S.aureus (MIC=100 uM). Shows cytolytic activity against insect cell lines. Has no hemolytic activity against human erythrocytes. In vivo, peptide injection in the vicinity of the head and thorax of lepidopteran larvae induces feeding disorder followed by death due to starvation. The sequence is that of Eumenitin VP1 from Eumenes pomiformis (Potter wasp).